Reading from the N-terminus, the 98-residue chain is uncharacterized protein (98 aa).

This is an uncharacterized protein from Invertebrate iridescent virus 6 (IIV-6).